Reading from the N-terminus, the 420-residue chain is Probable pectate lyase C (420 aa).

The first 20 residues, 1-20 (MKLSEPLLVSLAAFSQAVTA), serve as a signal peptide directing secretion. Residues Asn-49, Asn-165, and Asn-202 are each glycosylated (N-linked (GlcNAc...) asparagine). Arg-205 is a catalytic residue. Residues 262 to 297 (NANFHGYVQNNYYDPDKDGQLDGFELGVSSSNYGGM) enclose the EF-hand domain. Ca(2+) is bound by residues Asp-275, Asp-277, Asp-279, Gln-281, and Glu-286. Residues 358–396 (TMGGPGTLNGGTPAKDTDGDGIPDEAEKQLGTDPNTNDS) are disordered. A glycan (N-linked (GlcNAc...) asparagine) is linked at Asn-394.

The protein belongs to the polysaccharide lyase 1 family. Ca(2+) is required as a cofactor.

The protein resides in the secreted. It catalyses the reaction Eliminative cleavage of (1-&gt;4)-alpha-D-galacturonan to give oligosaccharides with 4-deoxy-alpha-D-galact-4-enuronosyl groups at their non-reducing ends.. Its function is as follows. Pectinolytic enzyme consist of four classes of enzymes: pectin lyase, polygalacturonase, pectin methylesterase and rhamnogalacturonase. Among pectinolytic enzymes, pectin lyase is the most important in depolymerization of pectin, since it cleaves internal glycosidic bonds of highly methylated pectins. Favors pectate, the anion, over pectin, the methyl ester. This chain is Probable pectate lyase C (plyC), found in Aspergillus fumigatus (strain ATCC MYA-4609 / CBS 101355 / FGSC A1100 / Af293) (Neosartorya fumigata).